Here is a 100-residue protein sequence, read N- to C-terminus: Aspartyl/glutamyl-tRNA(Asn/Gln) amidotransferase subunit C (100 aa).

It belongs to the GatC family. As to quaternary structure, heterotrimer of A, B and C subunits.

It carries out the reaction L-glutamyl-tRNA(Gln) + L-glutamine + ATP + H2O = L-glutaminyl-tRNA(Gln) + L-glutamate + ADP + phosphate + H(+). It catalyses the reaction L-aspartyl-tRNA(Asn) + L-glutamine + ATP + H2O = L-asparaginyl-tRNA(Asn) + L-glutamate + ADP + phosphate + 2 H(+). Allows the formation of correctly charged Asn-tRNA(Asn) or Gln-tRNA(Gln) through the transamidation of misacylated Asp-tRNA(Asn) or Glu-tRNA(Gln) in organisms which lack either or both of asparaginyl-tRNA or glutaminyl-tRNA synthetases. The reaction takes place in the presence of glutamine and ATP through an activated phospho-Asp-tRNA(Asn) or phospho-Glu-tRNA(Gln). In Dictyoglomus turgidum (strain DSM 6724 / Z-1310), this protein is Aspartyl/glutamyl-tRNA(Asn/Gln) amidotransferase subunit C.